We begin with the raw amino-acid sequence, 271 residues long: MAYVSMKQMLETGVHFGHQTRRWNPKMRPFIFGARNGIHIIDLQQTVKLFRTAHDKVVDTVVNGGKVVFIGTKRQAQEAVAVEAGRAGQFYVTNRWMGGTLTNFTTIQKSIDRLKKLEAMFADGTVNKYQKKEILRMQREMDKLLATLGGIKEMDRLPQLAFIVDPHREDIAVKECRKLGIPIVAVTDTNCDPDLIDFVIPGNDDAIRAIKLFVAAIADACLEGDAMRKERKGKDAEEELKKAAAPKAAPAAEAAPAAEAPAAPVVEAAAE.

The segment covering K229 to K242 has biased composition (basic and acidic residues). The interval K229–E271 is disordered. Positions A243–E271 are enriched in low complexity.

It belongs to the universal ribosomal protein uS2 family.

The chain is Small ribosomal subunit protein uS2 from Nitratidesulfovibrio vulgaris (strain DSM 19637 / Miyazaki F) (Desulfovibrio vulgaris).